We begin with the raw amino-acid sequence, 508 residues long: Light-independent protochlorophyllide reductase subunit B (508 aa).

Asp36 is a [4Fe-4S] cluster binding site. Asp294 (proton donor) is an active-site residue. 429 to 430 (GM) contributes to the substrate binding site.

Belongs to the ChlB/BchB/BchZ family. In terms of assembly, protochlorophyllide reductase is composed of three subunits; ChlL, ChlN and ChlB. Forms a heterotetramer of two ChlB and two ChlN subunits. It depends on [4Fe-4S] cluster as a cofactor.

It catalyses the reaction chlorophyllide a + oxidized 2[4Fe-4S]-[ferredoxin] + 2 ADP + 2 phosphate = protochlorophyllide a + reduced 2[4Fe-4S]-[ferredoxin] + 2 ATP + 2 H2O. It participates in porphyrin-containing compound metabolism; chlorophyll biosynthesis (light-independent). Component of the dark-operative protochlorophyllide reductase (DPOR) that uses Mg-ATP and reduced ferredoxin to reduce ring D of protochlorophyllide (Pchlide) to form chlorophyllide a (Chlide). This reaction is light-independent. The NB-protein (ChlN-ChlB) is the catalytic component of the complex. The protein is Light-independent protochlorophyllide reductase subunit B of Rippkaea orientalis (strain PCC 8801 / RF-1) (Cyanothece sp. (strain PCC 8801)).